The primary structure comprises 217 residues: Small ribosomal subunit protein uS3 (217 aa).

Residues 40 to 110 (IRDLINKWFN…EVYINIHEVR (71 aa)) form the KH type-2 domain.

It belongs to the universal ribosomal protein uS3 family. Part of the 30S ribosomal subunit. Forms a tight complex with proteins S10 and S14.

Functionally, binds the lower part of the 30S subunit head. Binds mRNA in the 70S ribosome, positioning it for translation. This chain is Small ribosomal subunit protein uS3, found in Rickettsia typhi (strain ATCC VR-144 / Wilmington).